A 166-amino-acid chain; its full sequence is MRVMGIDCGSEYTGFGIVESDDRARLHCIVAGAVHLSARDPLENKLAKIFRELCSVIREHDPEVVAIEDVFYAVNAKSALKLGHVRGVAMLAVAECGLRVATYAPLAVKSAVVGYGKAEKCQVQAMVARLLNLPQVPEPADVADALAIAICHLHTSATLTRMHAKA.

Active-site residues include Asp-7, Glu-68, and Asp-141. Positions 7, 68, and 141 each coordinate Mg(2+).

The protein belongs to the RuvC family. In terms of assembly, homodimer which binds Holliday junction (HJ) DNA. The HJ becomes 2-fold symmetrical on binding to RuvC with unstacked arms; it has a different conformation from HJ DNA in complex with RuvA. In the full resolvosome a probable DNA-RuvA(4)-RuvB(12)-RuvC(2) complex forms which resolves the HJ. It depends on Mg(2+) as a cofactor.

It localises to the cytoplasm. It catalyses the reaction Endonucleolytic cleavage at a junction such as a reciprocal single-stranded crossover between two homologous DNA duplexes (Holliday junction).. Functionally, the RuvA-RuvB-RuvC complex processes Holliday junction (HJ) DNA during genetic recombination and DNA repair. Endonuclease that resolves HJ intermediates. Cleaves cruciform DNA by making single-stranded nicks across the HJ at symmetrical positions within the homologous arms, yielding a 5'-phosphate and a 3'-hydroxyl group; requires a central core of homology in the junction. The consensus cleavage sequence is 5'-(A/T)TT(C/G)-3'. Cleavage occurs on the 3'-side of the TT dinucleotide at the point of strand exchange. HJ branch migration catalyzed by RuvA-RuvB allows RuvC to scan DNA until it finds its consensus sequence, where it cleaves and resolves the cruciform DNA. This Koribacter versatilis (strain Ellin345) protein is Crossover junction endodeoxyribonuclease RuvC.